The following is a 326-amino-acid chain: mRNA decay activator protein ZFP36 (326 aa).

Residues 1–15 (MDLTAIYESLLSLSP) are necessary for nuclear export. Residues 1-100 (MDLTAIYESL…PTSPTATSTT (100 aa)) are necessary and sufficient for the association with mRNA decay enzymes and mRNA decay activation. Necessary for localization of ARE-containing mRNAs to processing bodies (PBs) regions lie at residues 1–174 (MDLT…DLAA) and 100–326 (TPSR…SVSE). The tract at residues 13-66 (LSPDVPVPSDHGGTESSPGWGSSGPWSLSPSDSSPSGVTSRLPGRSTSLVEGRS) is disordered. A compositionally biased stretch (low complexity) spans 28–49 (SSPGWGSSGPWSLSPSDSSPSG). Ser-60 carries the post-translational modification Phosphoserine; by MAPKAPK2. Ser-66 bears the Phosphoserine mark. The P-P-P-P-G repeat unit spans residues 71-75 (PPPPG). Residues 78–102 (PLAPRLGPELSPSPTSPTATSTTPS) form a disordered region. A phosphoserine mark is found at Ser-88 and Ser-90. Thr-92 is subject to Phosphothreonine. Ser-93 bears the Phosphoserine mark. Positions 95-168 (TATSTTPSRY…GSRCHFIHNP (74 aa)) are necessary for nuclear localization. The tract at residues 97–173 (TSTTPSRYKT…FIHNPSEDLA (77 aa)) is necessary for RNA-binding. 2 consecutive C3H1-type zinc fingers follow at residues 103–131 (RYKT…HGLG) and 141–169 (KYKT…HNPS). The interval 103 to 194 (RYKTELCRTF…ISFSGLPSGR (92 aa)) is necessary for interaction with PABPN1. Phosphoserine is present on Ser-169. Residues 174–326 (APGHPPVLRQ…PIFNRISVSE (153 aa)) are necessary for mRNA decay activation. Disordered regions lie at residues 175 to 245 (PGHP…RRDP) and 273 to 292 (SVQS…SSLG). Position 186 is a phosphoserine; by MAPKAPK2 (Ser-186). Residue Ser-197 is modified to Phosphoserine. Residues 198-202 (PPPPG) form a P-P-P-P-G repeat. Low complexity predominate over residues 204–216 (AGPSLSSSSFSPS). Position 218 is a phosphoserine (Ser-218). Residues 219-223 (PPPPG) form a P-P-P-P-G repeat. A Phosphoserine; by MAPK1; in vitro modification is found at Ser-228. Residues Ser-276, Ser-296, and Ser-323 each carry the phosphoserine modification. Positions 312–326 (APRRLPIFNRISVSE) are interaction with CNOT1.

In terms of assembly, associates with cytoplasmic CCR4-NOT and PAN2-PAN3 deadenylase complexes to trigger ARE-containing mRNA deadenylation and decay processes. Part of a mRNA decay activation complex at least composed of poly(A)-specific exoribonucleases CNOT6, EXOSC2 and XRN1 and mRNA-decapping enzymes DCP1A and DCP2. Associates with the RNA exosome complex. Interacts (via phosphorylated form) with 14-3-3 proteins; these interactions promote exclusion of ZFP36 from cytoplasmic stress granules in response to arsenite treatment in a MAPKAPK2-dependent manner and does not prevent CCR4-NOT deadenylase complex recruitment or ZFP36-induced ARE-containing mRNA deadenylation and decay processes. Interacts with 14-3-3 proteins; these interactions occur in response to rapamycin in an Akt-dependent manner. Interacts with AGO2 and AGO4. Interacts (via C-terminus) with CNOT1; this interaction occurs in a RNA-independent manner and induces mRNA deadenylation. Interacts (via N-terminus) with CNOT6. Interacts with CNOT6L. Interacts (via C-terminus) with CNOT7; this interaction occurs in a RNA-independent manner, induces mRNA deadenylation and is inhibited in a phosphorylation MAPKAPK2-dependent manner. Interacts (via unphosphorylated form) with CNOT8; this interaction occurs in a RNA-independent manner and is inhibited in a phosphorylation MAPKAPK2-dependent manner. Interacts with DCP1A. Interacts (via N-terminus) with DCP2. Interacts with EDC3. Interacts (via N-terminus) with EXOSC2. Interacts with heat shock 70 kDa proteins. Interacts with KHSRP; this interaction increases upon cytokine-induced treatment. Interacts with MAP3K4; this interaction enhances the association with SH3KBP1/CIN85. Interacts with MAPKAPK2; this interaction occurs upon skeletal muscle satellite cell activation. Interacts with NCL. Interacts with NUP214; this interaction increases upon lipopolysaccharide (LPS) stimulation. Interacts with PABPC1; this interaction occurs in a RNA-dependent manner. Interacts (via hypophosphorylated form) with PABPN1 (via RRM domain and C-terminal arginine-rich region); this interaction occurs in the nucleus in a RNA-independent manner, decreases in presence of single-stranded poly(A) RNA-oligomer and in a p38 MAPK-dependent-manner and inhibits nuclear poly(A) tail synthesis. Interacts with PAN2. Interacts (via C3H1-type zinc finger domains) with PKM. Interacts (via C3H1-type zinc finger domains) with nuclear RNA poly(A) polymerase. Interacts with PPP2CA; this interaction occurs in LPS-stimulated cells and induces ZFP36 dephosphorylation, and hence may promote ARE-containing mRNAs decay. Interacts (via C-terminus) with PRR5L (via C-terminus); this interaction may accelerate ZFP36-mediated mRNA decay during stress. Interacts (via C-terminus) with SFN; this interaction occurs in a phosphorylation-dependent manner. Interacts (via extreme C-terminal region) with SH3KBP1/CIN85 (via SH3 domains); this interaction enhances MAP3K4-induced phosphorylation of ZFP36 at Ser-66 and Ser-93 and does not alter neither ZFP36 binding to ARE-containing transcripts nor TNF-alpha mRNA decay. Interacts with XRN1. Interacts (via C-terminus and Ser-186 phosphorylated form) with YWHAB; this interaction occurs in a p38/MAPKAPK2-dependent manner, increases cytoplasmic localization of ZFP36 and protects ZFP36 from Ser-186 dephosphorylation by serine/threonine phosphatase 2A, and hence may be crucial for stabilizing ARE-containing mRNAs. Interacts (via phosphorylated form) with YWHAE. Interacts (via C-terminus) with YWHAG; this interaction occurs in a phosphorylation-dependent manner. Interacts with YWHAH; this interaction occurs in a phosphorylation-dependent manner. Interacts with YWHAQ; this interaction occurs in a phosphorylation-dependent manner. Interacts with (via C-terminus) YWHAZ; this interaction occurs in a phosphorylation-dependent manner. Interacts (via P-P-P-P-G repeats) with GIGYF2; the interaction is direct. (Microbial infection) Interacts (via C-terminus) with HTLV-1 TAX (via C-terminus); this interaction inhibits HTLV-1 TAX to transactivate viral long terminal repeat (LTR) promoter. Post-translationally, phosphorylated. Phosphorylation at serine and/or threonine residues occurs in a p38 MAPK- and MAPKAPK2-dependent manner. Phosphorylated by MAPKAPK2 at Ser-60 and Ser-186; phosphorylation increases its stability and cytoplasmic localization, promotes binding to 14-3-3 adapter proteins and inhibits the recruitment of cytoplasmic CCR4-NOT and PAN2-PAN3 deadenylase complexes to the mRNA decay machinery, thereby inhibiting ZFP36-induced ARE-containing mRNA deadenylation and decay processes. Phosphorylation by MAPKAPK2 does not impair ARE-containing RNA-binding. Phosphorylated in a MAPKAPK2- and p38 MAPK-dependent manner upon skeletal muscle satellite cell activation; this phosphorylation inhibits ZFP36-mediated mRNA decay activity, and hence stabilizes MYOD1 mRNA. Phosphorylated by MAPK1 upon mitogen stimulation. Phosphorylated at Ser-66 and Ser-93; these phosphorylations increase in a SH3KBP1-dependent manner. Phosphorylated at serine and threonine residues in a pyruvate kinase PKM- and p38 MAPK-dependent manner. Phosphorylation at Ser-60 may participate in the PKM-mediated degradation of ZFP36 in a p38 MAPK-dependent manner. Dephosphorylated by serine/threonine phosphatase 2A at Ser-186. Ubiquitinated; pyruvate kinase (PKM)-dependent ubiquitination leads to proteasomal degradation through a p38 MAPK signaling pathway. In terms of tissue distribution, expressed in both basal and suprabasal epidermal layers. Expressed in epidermal keratinocytes. Expressed strongly in mature dendritic cells. Expressed in immature dendritic cells (at protein level).

It is found in the nucleus. The protein resides in the cytoplasm. Its subcellular location is the cytoplasmic granule. It localises to the P-body. In terms of biological role, zinc-finger RNA-binding protein that destabilizes several cytoplasmic AU-rich element (ARE)-containing mRNA transcripts by promoting their poly(A) tail removal or deadenylation, and hence provide a mechanism for attenuating protein synthesis. Acts as an 3'-untranslated region (UTR) ARE mRNA-binding adapter protein to communicate signaling events to the mRNA decay machinery. Recruits deadenylase CNOT7 (and probably the CCR4-NOT complex) via association with CNOT1, and hence promotes ARE-mediated mRNA deadenylation. Functions also by recruiting components of the cytoplasmic RNA decay machinery to the bound ARE-containing mRNAs. Self regulates by destabilizing its own mRNA. Binds to 3'-UTR ARE of numerous mRNAs and of its own mRNA. Plays a role in anti-inflammatory responses; suppresses tumor necrosis factor (TNF)-alpha production by stimulating ARE-mediated TNF-alpha mRNA decay and several other inflammatory ARE-containing mRNAs in interferon (IFN)- and/or lipopolysaccharide (LPS)-induced macrophages. Also plays a role in the regulation of dendritic cell maturation at the post-transcriptional level, and hence operates as part of a negative feedback loop to limit the inflammatory response. Promotes ARE-mediated mRNA decay of hypoxia-inducible factor HIF1A mRNA during the response of endothelial cells to hypoxia. Positively regulates early adipogenesis of preadipocytes by promoting ARE-mediated mRNA decay of immediate early genes (IEGs). Negatively regulates hematopoietic/erythroid cell differentiation by promoting ARE-mediated mRNA decay of the transcription factor STAT5B mRNA. Plays a role in maintaining skeletal muscle satellite cell quiescence by promoting ARE-mediated mRNA decay of the myogenic determination factor MYOD1 mRNA. Associates also with and regulates the expression of non-ARE-containing target mRNAs at the post-transcriptional level, such as MHC class I mRNAs. Participates in association with argonaute RISC catalytic components in the ARE-mediated mRNA decay mechanism; assists microRNA (miRNA) targeting ARE-containing mRNAs. May also play a role in the regulation of cytoplasmic mRNA decapping; enhances decapping of ARE-containing RNAs, in vitro. Involved in the delivery of target ARE-mRNAs to processing bodies (PBs). In addition to its cytosolic mRNA-decay function, affects nuclear pre-mRNA processing. Negatively regulates nuclear poly(A)-binding protein PABPN1-stimulated polyadenylation activity on ARE-containing pre-mRNA during LPS-stimulated macrophages. Also involved in the regulation of stress granule (SG) and P-body (PB) formation and fusion. Plays a role in the regulation of keratinocyte proliferation, differentiation and apoptosis. Plays a role as a tumor suppressor by inhibiting cell proliferation in breast cancer cells. (Microbial infection) Negatively regulates HTLV-1 TAX-dependent transactivation of viral long terminal repeat (LTR) promoter. This Homo sapiens (Human) protein is mRNA decay activator protein ZFP36.